The chain runs to 188 residues: Adenine phosphoribosyltransferase (188 aa).

This sequence belongs to the purine/pyrimidine phosphoribosyltransferase family. In terms of assembly, homodimer.

The protein resides in the cytoplasm. The catalysed reaction is AMP + diphosphate = 5-phospho-alpha-D-ribose 1-diphosphate + adenine. The protein operates within purine metabolism; AMP biosynthesis via salvage pathway; AMP from adenine: step 1/1. Its function is as follows. Catalyzes a salvage reaction resulting in the formation of AMP, that is energically less costly than de novo synthesis. In Frankia casuarinae (strain DSM 45818 / CECT 9043 / HFP020203 / CcI3), this protein is Adenine phosphoribosyltransferase.